The following is a 121-amino-acid chain: Peptidyl-tRNA hydrolase (121 aa).

This sequence belongs to the PTH2 family.

Its subcellular location is the cytoplasm. It catalyses the reaction an N-acyl-L-alpha-aminoacyl-tRNA + H2O = an N-acyl-L-amino acid + a tRNA + H(+). In terms of biological role, the natural substrate for this enzyme may be peptidyl-tRNAs which drop off the ribosome during protein synthesis. The chain is Peptidyl-tRNA hydrolase from Sulfurisphaera tokodaii (strain DSM 16993 / JCM 10545 / NBRC 100140 / 7) (Sulfolobus tokodaii).